The sequence spans 400 residues: tRNA (guanine-N(7)-)-methyltransferase (400 aa).

S-adenosyl-L-methionine is bound by residues glutamate 124, glutamate 149, and aspartate 176. Aspartate 232 lines the substrate pocket.

Belongs to the class I-like SAM-binding methyltransferase superfamily. TrmB family.

It carries out the reaction guanosine(46) in tRNA + S-adenosyl-L-methionine = N(7)-methylguanosine(46) in tRNA + S-adenosyl-L-homocysteine. It functions in the pathway tRNA modification; N(7)-methylguanine-tRNA biosynthesis. Functionally, catalyzes the formation of N(7)-methylguanine at position 46 (m7G46) in tRNA. In Helicobacter pylori (strain J99 / ATCC 700824) (Campylobacter pylori J99), this protein is tRNA (guanine-N(7)-)-methyltransferase.